Consider the following 364-residue polypeptide: Valine dehydrogenase (364 aa).

Residue Lys91 is part of the active site. NAD(+) is bound at residue 191-197 (GVGKVGH).

This sequence belongs to the Glu/Leu/Phe/Val dehydrogenases family. In terms of assembly, homodimer.

The protein localises to the cytoplasm. The enzyme catalyses L-valine + NAD(+) + H2O = 3-methyl-2-oxobutanoate + NH4(+) + NADH + H(+). Its pathway is amino-acid degradation; L-valine degradation. With respect to regulation, inhibited by pyridoxal 5'-phosphate (PLP). In terms of biological role, oxidative deamination of branched-chain amino acids. Oxidizes L-valine and L-alpha-aminobutyric acid efficiently, and L-alanine and L-isoleucine less efficiently. D-valine and L-glutamate were not substrates for the enzyme. The catabolism of valine is the major source of fatty acid precursors for macrolide biosynthesis and a vital source of antibiotic precursors. This chain is Valine dehydrogenase, found in Streptomyces albus (strain ATCC 21838 / DSM 41398 / FERM P-419 / JCM 4703 / NBRC 107858).